The chain runs to 192 residues: Probable cobalt-precorrin-6B C(15)-methyltransferase (decarboxylating) (192 aa).

Residues Thr-17, Gly-41–Gly-45, Asp-62, and Ala-91 contribute to the S-adenosyl-L-methionine site.

This sequence belongs to the methyltransferase superfamily. Archaeal-type CbiT family. As to quaternary structure, homotetramer.

The enzyme catalyses Co-precorrin-6B + S-adenosyl-L-methionine = Co-precorrin-7 + S-adenosyl-L-homocysteine + CO2. It functions in the pathway cofactor biosynthesis; adenosylcobalamin biosynthesis; cob(II)yrinate a,c-diamide from sirohydrochlorin (anaerobic route): step 8/10. Its function is as follows. Catalyzes the methylation of C-15 in cobalt-precorrin-6B followed by the decarboxylation of C-12 to form cobalt-precorrin-7. The chain is Probable cobalt-precorrin-6B C(15)-methyltransferase (decarboxylating) from Methanothermobacter thermautotrophicus (strain ATCC 29096 / DSM 1053 / JCM 10044 / NBRC 100330 / Delta H) (Methanobacterium thermoautotrophicum).